The sequence spans 622 residues: Arginine--tRNA ligase (622 aa).

The 'HIGH' region signature appears at alanine 127–histidine 137.

It belongs to the class-I aminoacyl-tRNA synthetase family.

Its subcellular location is the cytoplasm. The catalysed reaction is tRNA(Arg) + L-arginine + ATP = L-arginyl-tRNA(Arg) + AMP + diphosphate. The sequence is that of Arginine--tRNA ligase from Ignicoccus hospitalis (strain KIN4/I / DSM 18386 / JCM 14125).